The chain runs to 140 residues: Large ribosomal subunit protein uL16 (140 aa).

Belongs to the universal ribosomal protein uL16 family. As to quaternary structure, part of the 50S ribosomal subunit.

Its function is as follows. Binds 23S rRNA and is also seen to make contacts with the A and possibly P site tRNAs. This Phytoplasma australiense protein is Large ribosomal subunit protein uL16.